The sequence spans 761 residues: 52 kDa repressor of the inhibitor of the protein kinase (761 aa).

Residues 1-86 (MPNFCAAPNC…LRDNAIPTIF (86 aa)) form a THAP-type zinc finger. Residues 116–132 (QKKIDETSEQEQKHKET) are compositionally biased toward basic and acidic residues. The interval 116–149 (QKKIDETSEQEQKHKETNNSNAQNPSEEEGEGQD) is disordered. S566 is modified (phosphoserine).

Interacts with DNAJC3, probably sequestring it.

Upstream regulator of interferon-induced serine/threonine protein kinase R (PKR). May block the PKR-inhibitory function of DNAJC3, resulting in restoration of kinase activity and suppression of cell growth. The polypeptide is 52 kDa repressor of the inhibitor of the protein kinase (Homo sapiens (Human)).